The primary structure comprises 192 residues: Peptide deformylase 1 (192 aa).

Positions 101 and 143 each coordinate Fe cation. Residue E144 is part of the active site. Residue H147 participates in Fe cation binding.

This sequence belongs to the polypeptide deformylase family. Fe(2+) serves as cofactor.

The enzyme catalyses N-terminal N-formyl-L-methionyl-[peptide] + H2O = N-terminal L-methionyl-[peptide] + formate. Functionally, removes the formyl group from the N-terminal Met of newly synthesized proteins. Requires at least a dipeptide for an efficient rate of reaction. N-terminal L-methionine is a prerequisite for activity but the enzyme has broad specificity at other positions. The sequence is that of Peptide deformylase 1 from Prochlorococcus marinus (strain MIT 9313).